A 742-amino-acid chain; its full sequence is Phosphoribosylformylglycinamidine synthase subunit PurL (742 aa).

The active site involves His-50. ATP-binding residues include Tyr-53 and Lys-92. Glu-94 contacts Mg(2+). Residues 95–98 (SHNH) and Arg-117 contribute to the substrate site. His-96 serves as the catalytic Proton acceptor. Asp-118 contributes to the Mg(2+) binding site. Position 241 (Gln-241) interacts with substrate. Residue Asp-269 participates in Mg(2+) binding. Position 313-315 (313-315 (ESQ)) interacts with substrate. 2 residues coordinate ATP: Asp-494 and Gly-531. Asn-532 contacts Mg(2+). Residue Ser-534 coordinates substrate.

Belongs to the FGAMS family. Monomer. Part of the FGAM synthase complex composed of 1 PurL, 1 PurQ and 2 PurS subunits.

Its subcellular location is the cytoplasm. The catalysed reaction is N(2)-formyl-N(1)-(5-phospho-beta-D-ribosyl)glycinamide + L-glutamine + ATP + H2O = 2-formamido-N(1)-(5-O-phospho-beta-D-ribosyl)acetamidine + L-glutamate + ADP + phosphate + H(+). It participates in purine metabolism; IMP biosynthesis via de novo pathway; 5-amino-1-(5-phospho-D-ribosyl)imidazole from N(2)-formyl-N(1)-(5-phospho-D-ribosyl)glycinamide: step 1/2. Functionally, part of the phosphoribosylformylglycinamidine synthase complex involved in the purines biosynthetic pathway. Catalyzes the ATP-dependent conversion of formylglycinamide ribonucleotide (FGAR) and glutamine to yield formylglycinamidine ribonucleotide (FGAM) and glutamate. The FGAM synthase complex is composed of three subunits. PurQ produces an ammonia molecule by converting glutamine to glutamate. PurL transfers the ammonia molecule to FGAR to form FGAM in an ATP-dependent manner. PurS interacts with PurQ and PurL and is thought to assist in the transfer of the ammonia molecule from PurQ to PurL. The polypeptide is Phosphoribosylformylglycinamidine synthase subunit PurL (Sinorhizobium fredii (strain NBRC 101917 / NGR234)).